A 67-amino-acid chain; its full sequence is Large ribosomal subunit protein uL29 (67 aa).

The protein belongs to the universal ribosomal protein uL29 family.

This Acetivibrio thermocellus (strain ATCC 27405 / DSM 1237 / JCM 9322 / NBRC 103400 / NCIMB 10682 / NRRL B-4536 / VPI 7372) (Clostridium thermocellum) protein is Large ribosomal subunit protein uL29.